A 513-amino-acid chain; its full sequence is Glycerol-3-phosphate dehydrogenase (513 aa).

Residue Asp16 to Glu44 coordinates FAD.

This sequence belongs to the FAD-dependent glycerol-3-phosphate dehydrogenase family. FAD is required as a cofactor.

Its subcellular location is the cytoplasm. It catalyses the reaction a quinone + sn-glycerol 3-phosphate = dihydroxyacetone phosphate + a quinol. The sequence is that of Glycerol-3-phosphate dehydrogenase (glpD) from Pseudomonas tolaasii.